Consider the following 405-residue polypeptide: Secreted aspartic protease 8 (405 aa).

Positions 1-23 are cleaved as a signal peptide; that stretch reads MVSIITFTKNVLVTLAFALLAQG. The propeptide at 24-75 is activation peptide; the sequence is LAIPEDIDKRAEKVVSLDFTVTRKPFNATAHGQHHQSQQQQQQQQQQPAQKR. The disordered stretch occupies residues 52–78; the sequence is TAHGQHHQSQQQQQQQQQQPAQKRGTV. The segment covering 58–70 has biased composition (low complexity); the sequence is HQSQQQQQQQQQQ. A Peptidase A1 domain is found at 89 to 392; sequence YAATITVGSN…DLDGNTISLA (304 aa). The active site involves Asp-107. 107-109 contributes to the pepstatin A binding site; it reads DTG. The cysteines at positions 122 and 134 are disulfide-linked. Residues 160-161 and 292-296 contribute to the pepstatin A site; these read ED and DSGTT. Asp-292 is a catalytic residue. Cysteines 327 and 358 form a disulfide.

The protein belongs to the peptidase A1 family. As to quaternary structure, monomer.

Its subcellular location is the secreted. It carries out the reaction Preferential cleavage at the carboxyl of hydrophobic amino acids, but fails to cleave 15-Leu-|-Tyr-16, 16-Tyr-|-Leu-17 and 24-Phe-|-Phe-25 of insulin B chain. Activates trypsinogen, and degrades keratin.. In terms of biological role, secreted aspartic peptidases (SAPs) are a group of ten acidic hydrolases considered as key virulence factors. These enzymes supply the fungus with nutrient amino acids as well as are able to degrade the selected host's proteins involved in the immune defense. Moreover, acts toward human hemoglobin though limited proteolysis to generate a variety of antimicrobial hemocidins, enabling to compete with the other microorganisms of the same physiological niche using the microbicidal peptides generated from the host protein. Its function is as follows. Plays a key role in defense against host by cleaving histatin-5 (Hst 5), a peptide from human saliva that carries out fungicidal activity. The cleavage rate decreases in an order of SAP2 &gt; SAP9 &gt; SAP3 &gt; SAP7 &gt; SAP4 &gt; SAP1 &gt; SAP8. The hydrolysis of Hst 5 by SAP8 causes production of the DSHAKRHHGY, HHSHRGY and FHEKHHSHRGY peptides. This is Secreted aspartic protease 8 from Candida albicans (strain SC5314 / ATCC MYA-2876) (Yeast).